The sequence spans 214 residues: MAALVKQLGLADYASTYEAMQAFTKARTSETLDEIWVLEHPPVFTLGLAGDAGNLHSPSNQISLVQVDRGGEITYHGPGQIVVYLLLDLRRLGIFVKELVSRIEQAVIDTLADFGVQAERHPGAPGIYVSQQSRVPPEWVGAKIAALGLKVSKSCSYHGLALNVATDLEAFKRIHPCGYEGLKTVDMQTLGIKDNMDTISLRLLQHLQKQLIPS.

The 186-residue stretch at 29–214 folds into the BPL/LPL catalytic domain; the sequence is SETLDEIWVL…QHLQKQLIPS (186 aa). Substrate contacts are provided by residues 69-76, 146-148, and 159-161; these read RGGEITYH, ALG, and GLA. The active-site Acyl-thioester intermediate is the C177.

This sequence belongs to the LipB family.

It is found in the cytoplasm. The enzyme catalyses octanoyl-[ACP] + L-lysyl-[protein] = N(6)-octanoyl-L-lysyl-[protein] + holo-[ACP] + H(+). Its pathway is protein modification; protein lipoylation via endogenous pathway; protein N(6)-(lipoyl)lysine from octanoyl-[acyl-carrier-protein]: step 1/2. In terms of biological role, catalyzes the transfer of endogenously produced octanoic acid from octanoyl-acyl-carrier-protein onto the lipoyl domains of lipoate-dependent enzymes. Lipoyl-ACP can also act as a substrate although octanoyl-ACP is likely to be the physiological substrate. This is Octanoyltransferase from Polynucleobacter necessarius subsp. necessarius (strain STIR1).